A 315-amino-acid chain; its full sequence is Type II restriction enzyme AvaI (315 aa).

It catalyses the reaction Endonucleolytic cleavage of DNA to give specific double-stranded fragments with terminal 5'-phosphates.. In terms of biological role, a P subtype restriction enzyme that recognizes the double-stranded sequence 5'-CYCGRG-3' and cleaves after C-1. The sequence is that of Type II restriction enzyme AvaI from Anabaena variabilis.